Consider the following 305-residue polypeptide: Sulfate adenylyltransferase subunit 2 (305 aa).

This sequence belongs to the PAPS reductase family. CysD subfamily. As to quaternary structure, heterodimer composed of CysD, the smaller subunit, and CysN.

It carries out the reaction sulfate + ATP + H(+) = adenosine 5'-phosphosulfate + diphosphate. It participates in sulfur metabolism; hydrogen sulfide biosynthesis; sulfite from sulfate: step 1/3. In terms of biological role, with CysN forms the ATP sulfurylase (ATPS) that catalyzes the adenylation of sulfate producing adenosine 5'-phosphosulfate (APS) and diphosphate, the first enzymatic step in sulfur assimilation pathway. APS synthesis involves the formation of a high-energy phosphoric-sulfuric acid anhydride bond driven by GTP hydrolysis by CysN coupled to ATP hydrolysis by CysD. The protein is Sulfate adenylyltransferase subunit 2 of Pseudomonas putida (strain ATCC 700007 / DSM 6899 / JCM 31910 / BCRC 17059 / LMG 24140 / F1).